The following is a 1114-amino-acid chain: M-phase phosphoprotein 9 (1114 aa).

5 disordered regions span residues 1–55 (MEDF…KTGP), 106–161 (RPSC…DCHV), 183–207 (AKEP…VVQA), 267–301 (TSWA…WKPP), and 410–468 (VLEP…STIP). Over residues 24-51 (APQSLGLSLHANRSSPHLSTNGVSSFSG) the composition is skewed to polar residues. Positions 106–119 (RPSCSSSSVSEQVS) are enriched in low complexity. The span at 149–161 (QPASSTSYPDCHV) shows a compositional bias: polar residues. 2 stretches are compositionally biased toward polar residues: residues 267 to 280 (TSWA…QSKQ) and 429 to 446 (HNPS…TTRA). The tract at residues 368 to 729 (LSQVLTLDPG…EAQVKQAEHE (362 aa)) is required for its centrosomal localization. The tract at residues 382–431 (KPKEHVAGIQAHGFLHALDDRISFSPDSVLEPSLSRHSDTDSSSQASHNP) is interaction with CEP97. Residues 574–733 (DRCGQLDSAL…KQAEHESMLS (160 aa)) are a coiled coil. Serine 710 bears the Phosphoserine; by TTBK2 mark. Lysine 713 is covalently cross-linked (Glycyl lysine isopeptide (Lys-Gly) (interchain with G-Cter in ubiquitin)). Serine 717 carries the phosphoserine; by TTBK2 modification. Disordered regions lie at residues 727-755 (EHES…TSDV), 840-931 (SWGT…GFSH), and 975-1002 (EEKK…NGLK). The tract at residues 730–963 (SMLSLRNGAK…PVSTLQQTTA (234 aa)) is interaction with KIF24. Over residues 852 to 868 (SKLVNSRQTEPSVNTGR) the composition is skewed to polar residues. Residues 881 to 898 (QTSASQRSSSLPPSSRKA) show a composition bias toward low complexity. Phosphoserine is present on serine 926. Basic and acidic residues predominate over residues 975–985 (EEKKYSEKNSD). A coiled-coil region spans residues 1040–1105 (RTLAETERFF…GSVRMTLKKF (66 aa)).

In terms of assembly, interacts with CCP110, CEP97 and KIF24. In terms of processing, TTBK2-mediated phosphorylation at Ser-710 and Ser-717, promotes its ubiquitination at Lys-713 leading to proteasomal degradation, loss of MPHOSPH9 facilitates the removal of the CP110-CEP97 complex from the mother centrioles, promoting the initiation of ciliogenesis. Phosphorylated in M (mitotic) phase. Post-translationally, ubiquitinated at Lys-713, leading to proteasomal degradation.

It is found in the cytoplasm. It localises to the cytoskeleton. The protein resides in the microtubule organizing center. The protein localises to the centrosome. Its subcellular location is the centriole. It is found in the golgi apparatus membrane. Functionally, negatively regulates cilia formation by recruiting the CP110-CEP97 complex (a negative regulator of ciliogenesis) at the distal end of the mother centriole in ciliary cells. At the beginning of cilia formation, MPHOSPH9 undergoes TTBK2-mediated phosphorylation and degradation via the ubiquitin-proteasome system and removes itself and the CP110-CEP97 complex from the distal end of the mother centriole, which subsequently promotes cilia formation. The polypeptide is M-phase phosphoprotein 9 (Mphosph9) (Mus musculus (Mouse)).